Here is a 67-residue protein sequence, read N- to C-terminus: Small ribosomal subunit protein eS31 (67 aa).

Zn(2+) is bound by residues C31, C34, C49, and C52. The C4-type zinc-finger motif lies at 31 to 52 (CPKCGAGVFMAEHLNRFACGKC).

Belongs to the eukaryotic ribosomal protein eS31 family. Part of the 30S ribosomal subunit. Zn(2+) is required as a cofactor.

The chain is Small ribosomal subunit protein eS31 from Methanococcus maripaludis (strain C6 / ATCC BAA-1332).